A 448-amino-acid polypeptide reads, in one-letter code: MTTILKHLPVGQRIGIAFSGGLDTSAALLWMRQKGAVPYAYTANLGQPDEDDYDEIPRRAMEYGAENARLIDCRKQLVAEGIAAIQCGAFHNTTAGVTYFNTTPLGRAVTGTMLVAAMKEDGVNIWGDGSTYKGNDIERFYRYGLLTNAELKIYKPWLDTDFIDELGGRQEMSEFMSQAGFGYKMSAEKAYSTDSNILGATHEAKDLEFLNSSVKIVNPIMGVKFWDENVKVPAEEVTIRFERGHPVALNGKTFTDDIELMLEANRIGGRHGLGMSDQIENRIIEAKSRGIYEAPGMALLHIAYERLLTGIHNEDTIEQYHANGRQLGRFLYQGRWFDSQALMLRDSSQRWIASAITGEVTLELRRGNDYSIMNTVSDNLTYKPERLTMEKGDSVFSPDDRIGQLTMRNLDITDTREKLFNYAETGLLSSSASTGLPQVGQLQDKTEK.

ATP is bound by residues 17–25 and A43; that span reads AFSGGLDTS. L-citrulline is bound at residue Y99. The ATP site is built by G129 and T131. L-aspartate contacts are provided by T131, N135, and D136. N135 serves as a coordination point for L-citrulline. D136 contacts ATP. R139 and S192 together coordinate L-citrulline. D194 is a binding site for ATP. L-citrulline-binding residues include T201, E203, and E280.

The protein belongs to the argininosuccinate synthase family. Type 2 subfamily. In terms of assembly, homotetramer.

The protein localises to the cytoplasm. The enzyme catalyses L-citrulline + L-aspartate + ATP = 2-(N(omega)-L-arginino)succinate + AMP + diphosphate + H(+). It participates in amino-acid biosynthesis; L-arginine biosynthesis; L-arginine from L-ornithine and carbamoyl phosphate: step 2/3. The sequence is that of Argininosuccinate synthase from Pectobacterium atrosepticum (strain SCRI 1043 / ATCC BAA-672) (Erwinia carotovora subsp. atroseptica).